The primary structure comprises 511 residues: Spermatogenesis-associated protein 2 (511 aa).

The region spanning 77-149 (ALHCAFSMLE…AYKLKELVES (73 aa)) is the PUB domain. Positions 320–337 (TYFPTQDDVDLYTDSEPR) match the PIM motif motif.

This sequence belongs to the SPATA2 family. Interacts (via the PIM motif) with RNF31/HOIP (via the PUB domain); the interaction is direct. Interacts (via the PUB domain) with CYLD; the interaction is direct. Expressed in the testis and to a lesser extent in the brain, while skeletal muscle and kidney show weak expression.

The protein localises to the cytoplasm. It localises to the nucleus. Its function is as follows. Bridging factor that mediates the recruitment of CYLD to the LUBAC complex, thereby regulating TNF-alpha-induced necroptosis. Acts as a direct binding intermediate that bridges RNF31/HOIP, the catalytic subunit of the LUBAC complex, and the deubiquitinase (CYLD), thereby recruiting CYLD to the TNF-R1 signaling complex (TNF-RSC). Required to activate the 'Met-1'- (linear) and 'Lys-63'-linked deubiquitinase activities of CYLD. Controls the kinase activity of RIPK1 and TNF-alpha-induced necroptosis by promoting 'Met-1'-linked deubiquitination of RIPK1 by CYLD. This chain is Spermatogenesis-associated protein 2, found in Rattus norvegicus (Rat).